The sequence spans 913 residues: Rab GTPase-activating protein tbc-8 (913 aa).

The tract at residues 1–24 (MQMFRHSSADMWRAKKPTLERRST) is disordered. One can recognise an RUN domain in the interval 106 to 240 (NLNSPYVTSL…TYRRMSNRIE (135 aa)). In terms of domain architecture, Rab-GAP TBC spans 597-844 (INTKEVRRMA…KVWEVIWAAQ (248 aa)).

It belongs to the RUTBC family. In terms of assembly, interacts with rab-19. Interacts with ric-19; the interaction is direct and may be required for the activation of rab-2 and dense vesicle maturation in cholinergic motoneurons. Interacts (via RUN domain) with rund-1. Does not interact with unc-108 (GTP-bound form). In terms of tissue distribution, expressed in neurons in the head, tail and ventral nerve cord (at protein level).

It localises to the golgi apparatus. It is found in the trans-Golgi network. The protein localises to the early endosome. The protein resides in the cytoplasmic vesicle membrane. In terms of biological role, interacts with numerous Rab family members, functioning as Rab effector for some, and as GTPase activator for others. GTPase activator for rab-2. In association with ric-19 activates rab-2 during dense core vesicle maturation in cholinergic motoneurons. The polypeptide is Rab GTPase-activating protein tbc-8 (Caenorhabditis elegans).